The primary structure comprises 644 residues: Mitochondrial 15S rRNA processing factor CCM1 (644 aa).

The N-terminal 38 residues, 1-38, are a transit peptide targeting the mitochondrion; it reads MVIVASSNMLRPDRIWLCGKYQTARTLYVVGNKSKRRN. Positions 78–108 are disordered; it reads ISKKSEKEVERSQIQSTEPSPETSTQLTQKN. Positions 89-108 are enriched in polar residues; that stretch reads SQIQSTEPSPETSTQLTQKN. PPR repeat units follow at residues 245 to 279, 280 to 315, and 318 to 352; these read PRET…GLQP, SKNT…SDKT, and AERA…KVEV.

This sequence belongs to the CCM1 family. Binds to mitochondrial small subunit 15S rRNA.

It localises to the mitochondrion. Regulates mitochondrial small subunit maturation by controlling 15S rRNA 5'-end processing. Localizes to the 5' precursor of the 15S rRNA in a position that is subsequently occupied by mS47 in the mature yeast mtSSU. Uses structure and sequence-specific RNA recognition, binding to a single-stranded region of the precursor and specifically recognizing bases -6 to -1. The exchange of Ccm1 for mS47 is coupled to the irreversible removal of precursor rRNA that is accompanied by conformational changes of the mitoribosomal proteins uS5m and mS26. These conformational changes signal completion of 5'-end rRNA processing through protection of the mature 5'-end of the 15S rRNA and stabilization of mS47. The removal of the 5' precursor together with the dissociation of Ccm1 may be catalyzed by the 5'-3' exoribonuclease Pet127. Involved in the specific removal of group I introns in mitochondrial encoded transcripts. The protein is Mitochondrial 15S rRNA processing factor CCM1 (CCM1) of Meyerozyma guilliermondii (strain ATCC 6260 / CBS 566 / DSM 6381 / JCM 1539 / NBRC 10279 / NRRL Y-324) (Yeast).